The sequence spans 886 residues: CRM-domain containing factor CFM3, chloroplastic/mitochondrial (886 aa).

The transit peptide at 1–70 (MAAAAMAISP…LDLRPEPSPS (70 aa)) directs the protein to the chloroplast and mitochondrion. 2 disordered regions span residues 56–84 (RPASALDLRPEPSPSSDSDDDAAFGTSRS) and 269–291 (TKGTSKNTQTLGMKSSIKEPPGH). CRM domains lie at 174-270 (LTLP…EPTK), 378-475 (PSLS…ELAE), and 590-690 (ETIT…SKLR). Residues 270–281 (KGTSKNTQTLGM) are compositionally biased toward polar residues. Positions 771–886 (SFDNSVAVQN…QSTELTNTCS (116 aa)) are disordered. A compositionally biased stretch (acidic residues) spans 793 to 827 (NSDDEGDYSDEDDDEDDDNDEEDGFDYENDDEDDV). 2 stretches are compositionally biased toward polar residues: residues 841–852 (DFGSSDSENYVS) and 869–886 (DSRNSYSEQSTELTNTCS).

As to quaternary structure, interacts with RNA. Part of large ribonucleo-protein particles that contain CAF1 and/or CAF2, and RNC1.

The protein localises to the plastid. The protein resides in the chloroplast. It localises to the mitochondrion. Binds specific group II introns in chloroplasts and facilitates their splicing. Acts on subgroup IIB introns. The substrates of the subgroup IIB also require the CRM domain proteins CAF1 or CAF2, with a simultaneous binding of CFM3 and CAF1 or CAF2. May influence the biogenesis of the mitochondrial small ribosomal subunit. This Oryza sativa subsp. japonica (Rice) protein is CRM-domain containing factor CFM3, chloroplastic/mitochondrial.